The chain runs to 133 residues: Urease subunit beta (133 aa).

The interval 106 to 133 is disordered; that stretch reads VFRPNDSNQNAAVKNDAGEDNANKKGGK.

It belongs to the urease beta subunit family. Heterotrimer of UreA (gamma), UreB (beta) and UreC (alpha) subunits. Three heterotrimers associate to form the active enzyme.

Its subcellular location is the cytoplasm. It catalyses the reaction urea + 2 H2O + H(+) = hydrogencarbonate + 2 NH4(+). It participates in nitrogen metabolism; urea degradation; CO(2) and NH(3) from urea (urease route): step 1/1. This is Urease subunit beta from Staphylococcus epidermidis (strain ATCC 12228 / FDA PCI 1200).